The primary structure comprises 819 residues: MKRKAEKAQAAAPVSAFAARKARQQQAQATAAAVKPPVAEPVVEPPPKRARRSLEEPVVPVAPEENRVQTRRSSRRKEEQAKVEKPTPKARNDQPPKASKKLPEHDTSKATEDQAPSDEESEEPDVVVGNTGVIGLEPIQNEEEGYESPADTAVQVQDFPLSKARLNKNSIVYSDEHRMCVRIKEKMSLVMIGHYDLWVKRGVVSLMGAKLHPSSQVYRVYAPSTHSLPVIKCVSGVNGEAEVEFKSCHSGIYRLKELSPLYQRIWNGKNTTADKLTLKGTPQSTKRTFSVLYTSADDSFKRHLRPLHLEKQWSSAIKSLSQRGGRLKTLICGPKGSGKSTFSRYLLNHLLSPAPQTETKYFNTDGVAFLDLDPGQPEFAPMGQVYLAHLRSPVFGPPFSHPSLDGSRNGTIVRSHHIGATSPKEDPDHYVLAAMDLMDRYRALQASYPQCPLIINYPGWIFGLGLEVATWLVRSLGLSDVVYMSEKGPTEVVQPLGQAAYQAKIPLTILPSQPTDFVSRSSAQLRSMQMQSYFHMSRPNGINNSLWLEQPLSRTKPFRVHYSGPQQGIQGIMVMGTEIHPDLLHEVLDGSIVAVVAVESPNAILGQNSGPMFANNANAETDGDHDVDMQDSADAVPVIGTSTIESSITRTPNEDLPYLFVGAGSSNPLDPKVSHCLGLALVRSVNVASRQLELVTPITGSTLRGVLEQGHSIVLVRGLLDNPNWAISEDYYAARAAEKRHRELIEKLKKDKGAAAAEDATLESEKQVLKDRIRRASKVPWMTVVEDNSRRQREAAQREKSLWKLRKKAYPGSDSEGDW.

The interval 1 to 129 (MKRKAEKAQA…ESEEPDVVVG (129 aa)) is disordered. The segment covering 8-42 (AQAAAPVSAFAARKARQQQAQATAAAVKPPVAEPV) has biased composition (low complexity). Basic and acidic residues-rich tracts occupy residues 76-94 (RKEE…RNDQ) and 101-112 (KLPEHDTSKATE). The span at 115–125 (APSDEESEEPD) shows a compositional bias: acidic residues. 333–340 (GPKGSGKS) contributes to the ATP binding site.

The protein belongs to the Clp1 family. NOL9/GRC3 subfamily.

It is found in the nucleus. Its subcellular location is the nucleolus. Functionally, polynucleotide 5'-kinase involved in rRNA processing. The protein is Polynucleotide 5'-hydroxyl-kinase grc3 (grc3) of Aspergillus niger (strain ATCC MYA-4892 / CBS 513.88 / FGSC A1513).